The following is a 217-amino-acid chain: Peptide deformylase (217 aa).

Fe cation is bound by residues Cys-91 and His-133. Glu-134 is a catalytic residue. Position 137 (His-137) interacts with Fe cation. Residues 153–217 are disordered; the sequence is VSEDGEEEEE…RRGSAAAKEE (65 aa). The span at 155–176 shows a compositional bias: acidic residues; that stretch reads EDGEEEEEAEVAEVMPEPEAEG. Over residues 177–192 the composition is skewed to low complexity; sequence AGEPSAEGAGQAAAEA. Over residues 206–217 the composition is skewed to basic and acidic residues; sequence GERRGSAAAKEE.

It belongs to the polypeptide deformylase family. It depends on Fe(2+) as a cofactor.

It catalyses the reaction N-terminal N-formyl-L-methionyl-[peptide] + H2O = N-terminal L-methionyl-[peptide] + formate. Removes the formyl group from the N-terminal Met of newly synthesized proteins. Requires at least a dipeptide for an efficient rate of reaction. N-terminal L-methionine is a prerequisite for activity but the enzyme has broad specificity at other positions. This chain is Peptide deformylase, found in Symbiobacterium thermophilum (strain DSM 24528 / JCM 14929 / IAM 14863 / T).